The chain runs to 198 residues: Recombination protein RecR (198 aa).

The C4-type zinc-finger motif lies at 57–72; sequence CSVCGHITDKDPCYIC. The Toprim domain maps to 80-175; that stretch reads SVICVVQESK…KVTRIAHGLP (96 aa).

The protein belongs to the RecR family.

May play a role in DNA repair. It seems to be involved in an RecBC-independent recombinational process of DNA repair. It may act with RecF and RecO. In Listeria monocytogenes serotype 4b (strain CLIP80459), this protein is Recombination protein RecR.